Here is a 379-residue protein sequence, read N- to C-terminus: UDP-N-acetylglucosamine--N-acetylmuramyl-(pentapeptide) pyrophosphoryl-undecaprenol N-acetylglucosamine transferase (379 aa).

UDP-N-acetyl-alpha-D-glucosamine contacts are provided by residues 17–19 (TGG), N128, R169, S197, and Q298.

This sequence belongs to the glycosyltransferase 28 family. MurG subfamily.

The protein localises to the cell inner membrane. The catalysed reaction is di-trans,octa-cis-undecaprenyl diphospho-N-acetyl-alpha-D-muramoyl-L-alanyl-D-glutamyl-meso-2,6-diaminopimeloyl-D-alanyl-D-alanine + UDP-N-acetyl-alpha-D-glucosamine = di-trans,octa-cis-undecaprenyl diphospho-[N-acetyl-alpha-D-glucosaminyl-(1-&gt;4)]-N-acetyl-alpha-D-muramoyl-L-alanyl-D-glutamyl-meso-2,6-diaminopimeloyl-D-alanyl-D-alanine + UDP + H(+). It participates in cell wall biogenesis; peptidoglycan biosynthesis. In terms of biological role, cell wall formation. Catalyzes the transfer of a GlcNAc subunit on undecaprenyl-pyrophosphoryl-MurNAc-pentapeptide (lipid intermediate I) to form undecaprenyl-pyrophosphoryl-MurNAc-(pentapeptide)GlcNAc (lipid intermediate II). This Brucella melitensis biotype 2 (strain ATCC 23457) protein is UDP-N-acetylglucosamine--N-acetylmuramyl-(pentapeptide) pyrophosphoryl-undecaprenol N-acetylglucosamine transferase.